The sequence spans 252 residues: ELH type 2 (252 aa).

A signal peptide spans 1-19 (AISLLMCLILSALCASSES). 3 propeptides span residues 20–75 (AVVH…VNNE), 92–130 (PQEV…QREL), and 144–185 (AAGD…SGIA). Over residues 145-161 (AGDEDKAEEHNPETESH) the composition is skewed to basic and acidic residues. Residues 145 to 171 (AGDEDKAEEHNPETESHSRRKRSALTP) are disordered. The residue at position 222 (lysine 222) is a Lysine amide.

This sequence belongs to the molluscan ELH family. As to expression, bag cell neurons.

It localises to the secreted. Its function is as follows. ELH acts as a neurotransmitter locally, upon neurons of the abdominal ganglion and as a hormone by diffusing into the circulating hemolymph and modulating the activity of other organs. It specifically causes contraction of smooth muscle in the ovotestis and expulsion of the egg string. Functionally, alpha-BCP decreases the activity of a cluster of neurons in the left upper quadrant of the abdominal ganglion. In terms of biological role, beta-BCP specifically excites 2 neurons, L1 and R1, in the abdominal ganglion. This chain is ELH type 2 (ELH2), found in Aplysia parvula (Dwarf sea hare).